The following is an 83-amino-acid chain: Small ribosomal subunit protein bS16 (83 aa).

This sequence belongs to the bacterial ribosomal protein bS16 family.

The sequence is that of Small ribosomal subunit protein bS16 from Stutzerimonas stutzeri (strain A1501) (Pseudomonas stutzeri).